A 79-amino-acid polypeptide reads, in one-letter code: Small ribosomal subunit protein bS18 (79 aa).

The protein belongs to the bacterial ribosomal protein bS18 family. Part of the 30S ribosomal subunit. Forms a tight heterodimer with protein bS6.

Binds as a heterodimer with protein bS6 to the central domain of the 16S rRNA, where it helps stabilize the platform of the 30S subunit. The protein is Small ribosomal subunit protein bS18 of Rhodopseudomonas palustris (strain BisB5).